Consider the following 130-residue polypeptide: NADH-quinone oxidoreductase subunit A (130 aa).

The next 3 membrane-spanning stretches (helical) occupy residues 15 to 35, 67 to 87, and 95 to 115; these read AIHV…ATII, FLIA…FAWA, and WVGL…LIYL.

The protein belongs to the complex I subunit 3 family. As to quaternary structure, NDH-1 is composed of 14 different subunits. Subunits NuoA, H, J, K, L, M, N constitute the membrane sector of the complex.

Its subcellular location is the cell inner membrane. It carries out the reaction a quinone + NADH + 5 H(+)(in) = a quinol + NAD(+) + 4 H(+)(out). Functionally, NDH-1 shuttles electrons from NADH, via FMN and iron-sulfur (Fe-S) centers, to quinones in the respiratory chain. The immediate electron acceptor for the enzyme in this species is believed to be ubiquinone. Couples the redox reaction to proton translocation (for every two electrons transferred, four hydrogen ions are translocated across the cytoplasmic membrane), and thus conserves the redox energy in a proton gradient. This chain is NADH-quinone oxidoreductase subunit A, found in Rhodopseudomonas palustris (strain BisA53).